We begin with the raw amino-acid sequence, 251 residues long: Cathelicidin-B1 (251 aa).

Positions 1–20 (MGRMWASEVLLLLLLGSSRA) are cleaved as a signal peptide. Residues 21–211 (VTPGLDVSTA…ELRCRPLRPQ (191 aa)) constitute a propeptide that is removed on maturation. The tract at residues 29 to 109 (TAPGLDGSIP…TITPKQDGSI (81 aa)) is disordered. 2 disulfides stabilise this stretch: Cys-172-Cys-181 and Cys-189-Cys-205.

This sequence belongs to the cathelicidin family. Detected in bursa of Fabricius, in filamentous structures surrounding the basal and lateral surfaces of bursal M cells (at protein level). Detected in bursa of Fabricius, in secretory enterocytes of the interfollicular bursal epithelium, but not in M cells.

The protein localises to the secreted. Has potent antimicrobial activity against Gram-positive and Gram-negative bacteria (in vitro). May play a role in the innate immune response. This chain is Cathelicidin-B1 (CATHB1), found in Gallus gallus (Chicken).